We begin with the raw amino-acid sequence, 243 residues long: Aspartate/glutamate leucyltransferase (243 aa).

Belongs to the R-transferase family. Bpt subfamily.

It is found in the cytoplasm. It carries out the reaction N-terminal L-glutamyl-[protein] + L-leucyl-tRNA(Leu) = N-terminal L-leucyl-L-glutamyl-[protein] + tRNA(Leu) + H(+). The catalysed reaction is N-terminal L-aspartyl-[protein] + L-leucyl-tRNA(Leu) = N-terminal L-leucyl-L-aspartyl-[protein] + tRNA(Leu) + H(+). In terms of biological role, functions in the N-end rule pathway of protein degradation where it conjugates Leu from its aminoacyl-tRNA to the N-termini of proteins containing an N-terminal aspartate or glutamate. The protein is Aspartate/glutamate leucyltransferase of Teredinibacter turnerae (strain ATCC 39867 / T7901).